Here is a 377-residue protein sequence, read N- to C-terminus: Anhydro-N-acetylmuramic acid kinase (377 aa).

12-19 (GTSLDGID) is an ATP binding site.

This sequence belongs to the anhydro-N-acetylmuramic acid kinase family.

The enzyme catalyses 1,6-anhydro-N-acetyl-beta-muramate + ATP + H2O = N-acetyl-D-muramate 6-phosphate + ADP + H(+). It participates in amino-sugar metabolism; 1,6-anhydro-N-acetylmuramate degradation. The protein operates within cell wall biogenesis; peptidoglycan recycling. In terms of biological role, catalyzes the specific phosphorylation of 1,6-anhydro-N-acetylmuramic acid (anhMurNAc) with the simultaneous cleavage of the 1,6-anhydro ring, generating MurNAc-6-P. Is required for the utilization of anhMurNAc either imported from the medium or derived from its own cell wall murein, and thus plays a role in cell wall recycling. The polypeptide is Anhydro-N-acetylmuramic acid kinase (Methylorubrum extorquens (strain CM4 / NCIMB 13688) (Methylobacterium extorquens)).